The chain runs to 475 residues: MAGAYDPSLPEVPEWLNKGDNAWQLTAATLVGLQSMPGLVILYASIVKKKWAVNSAFMALYAFAAVLLCWVLLCYKMAFGEELLPFWGKGGPAFDQGYLKGQAKIPNSNVAAPYFPMATLVYFQFTFAAITTILVAGSVLGRMNIKAWMAFVPLWLIFSYTVGAYSIWGGGFLYQWGVIDYSGGYVIHLSSGVAGFVAAYWVGPRPKADRERFPPNNVLLMLAGAGLLWMGWSGFNGGAPYAANLTSSIAVLNTNLSAATSLLVWTTLDVIFFGKPSVIGAIQGMVTGLAGVTPGAGLIQTWAAIIIGVVSGTAPWASMMIIHKKSALLQKVDDTLAVFYTHAVAGLLGGIMTGLFAHPDLCVLVLPLPATRGAFYGGNGGKQLLKQLAGAAFIAVWNVVSTTIILLAIRVFIPLRMAEEELGIGDDAAHGEEAYALWGDGEKFDATRHVQQFERDQEAAHPSYVHGARGVTIVL.

11 helical membrane-spanning segments follow: residues 27-47, 55-75, 120-140, 148-168, 183-203, 218-238, 254-274, 279-299, 302-322, 336-356, and 389-409; these read AATLVGLQSMPGLVILYASIV, SAFMALYAFAAVLLCWVLLCY, LVYFQFTFAAITTILVAGSVL, WMAFVPLWLIFSYTVGAYSIW, GGYVIHLSSGVAGFVAAYWVG, VLLMLAGAGLLWMGWSGFNGG, TNLSAATSLLVWTTLDVIFFG, IGAIQGMVTGLAGVTPGAGLI, WAAIIIGVVSGTAPWASMMII, LAVFYTHAVAGLLGGIMTGLF, and AGAAFIAVWNVVSTTIILLAI.

Belongs to the ammonia transporter channel (TC 1.A.11.2) family. In terms of tissue distribution, higher expression in shoots than roots.

Its subcellular location is the cell membrane. Its function is as follows. High affinity ammonium transporter that may play an important role in moving ammonium between the apoplast and symplast of cells throughout the plant. Does not transport methylammonium. The protein is Ammonium transporter 2 (AMT2) of Arabidopsis thaliana (Mouse-ear cress).